Consider the following 1113-residue polypeptide: Histone deacetylase 5 (1113 aa).

The tract at residues 1–22 (MNSPNESDGMSGREPSLGILPR) is disordered. A Glycyl lysine isopeptide (Lys-Gly) (interchain with G-Cter in SUMO2) cross-link involves residue lysine 35. Disordered regions lie at residues 39–63 (PGAMPSSMGGGGGGSPSPVELRGAL) and 187–272 (KEPT…SSPL). A compositionally biased stretch (basic and acidic residues) spans 238–249 (DSRDDFPLRKTA). The residue at position 250 (serine 250) is a Phosphoserine; by AMPK, CaMK1, SIK1 and PKD/PRKD1. Positions 263-272 (KVAERRSSPL) are enriched in basic and acidic residues. At threonine 283 the chain carries Phosphothreonine; by PKC. Residues 472–494 (RTVGKLPRHRPLSRTQSSPLPQS) form a disordered region. A compositionally biased stretch (low complexity) spans 484 to 494 (SRTQSSPLPQS). Serine 488 carries the post-translational modification Phosphoserine; by AMPK, CaMK1, SIK1 and PKD/PRKD1. N6-acetyllysine is present on lysine 523. Positions 526-611 (TKTGELSRQP…PDEGPDLEES (86 aa)) are disordered. Positions 571-610 (STQEDLEEEEEEEEEEEEDCIQVKDEDGESGPDEGPDLEE) are enriched in acidic residues. Serine 600 and serine 650 each carry phosphoserine. Residues 675–1019 (GVVYDTFMLK…VSALLSVELQ (345 aa)) are histone deacetylase. Residues cysteine 687, cysteine 689, histidine 695, and cysteine 772 each contribute to the Zn(2+) site. Residue histidine 824 is part of the active site. Residues 1072 to 1113 (EEAETVSAMALLSVGAEQAQAVATQEHSPRPAEEPMEQEPAL) carry the Nuclear export signal motif. The segment at 1088–1113 (EQAQAVATQEHSPRPAEEPMEQEPAL) is disordered. Serine 1099 is subject to Phosphoserine.

Belongs to the histone deacetylase family. HD type 2 subfamily. As to quaternary structure, interacts with AHRR, BAHD1, BCOR, HDAC7, HDAC9, CTBP1, MEF2C, NCOR2, NRIP1, PHB2 and a 14-3-3 chaperone protein. Interacts with BCL6, DDIT3/CHOP, GRK5, KDM5B and MYOCD. Interacts with EP300 in the presence of TFAP2C. Interacts with ANKRA2. Interacts with CUL7 (as part of the 3M complex); negatively regulated by ANKRA2. Interacts with ZBTB7B; the interaction allows the recruitment of HDAC4 on CD8 loci for deacetylation and possible inhibition of CD8 genes expression. Interacts with RARA. In terms of processing, phosphorylated by AMPK, CaMK1, SIK1 and PRKD1 at Ser-250 and Ser-488. The phosphorylation is required for the export to the cytoplasm and inhibition. Phosphorylated by the PKC kinases PKN1 and PKN2, impairing nuclear import. Phosphorylated by GRK5, leading to nuclear export of HDAC5 and allowing MEF2-mediated transcription. Ubiquitinated. Polyubiquitination however does not lead to its degradation.

Its subcellular location is the nucleus. It localises to the cytoplasm. It carries out the reaction N(6)-acetyl-L-lysyl-[histone] + H2O = L-lysyl-[histone] + acetate. In terms of biological role, responsible for the deacetylation of lysine residues on the N-terminal part of the core histones (H2A, H2B, H3 and H4). Histone deacetylation gives a tag for epigenetic repression and plays an important role in transcriptional regulation, cell cycle progression and developmental events. Histone deacetylases act via the formation of large multiprotein complexes. Involved in muscle maturation by repressing transcription of myocyte enhancer MEF2C. During muscle differentiation, it shuttles into the cytoplasm, allowing the expression of myocyte enhancer factors. Serves as a corepressor of RARA and causes its deacetylation. In association with RARA, plays a role in the repression of microRNA-10a and thereby in the inflammatory response. The protein is Histone deacetylase 5 (Hdac5) of Mus musculus (Mouse).